Reading from the N-terminus, the 447-residue chain is Phosphoglucosamine mutase (447 aa).

Ser-103 acts as the Phosphoserine intermediate in catalysis. The Mg(2+) site is built by Ser-103, Asp-242, Asp-244, and Asp-246. Ser-103 is modified (phosphoserine).

It belongs to the phosphohexose mutase family. Mg(2+) is required as a cofactor. Post-translationally, activated by phosphorylation.

The enzyme catalyses alpha-D-glucosamine 1-phosphate = D-glucosamine 6-phosphate. Catalyzes the conversion of glucosamine-6-phosphate to glucosamine-1-phosphate. The polypeptide is Phosphoglucosamine mutase (Dinoroseobacter shibae (strain DSM 16493 / NCIMB 14021 / DFL 12)).